The sequence spans 183 residues: Oleosin-B2 (183 aa).

Positions Gln1 to Lys23 are polar. A run of 3 helical transmembrane segments spans residues Leu24–Gly44, Ala46–Ala66, and Leu72–Met92. The hydrophobic stretch occupies residues Leu24 to Val95.

This sequence belongs to the oleosin family. As to expression, the full-length protein is found in the tapetal lipid bodies of immature anthers, the proteolytically cleaved C-terminal product is found on the coats of pollen grains. Not present in seeds.

The protein localises to the lipid droplet. It is found in the membrane. Its function is as follows. Many of the major pollen coat proteins are derived from endoproteolytic cleavage of oleosin-like proteins. This chain is Oleosin-B2 (OlnB2), found in Brassica napus (Rape).